The following is a 398-amino-acid chain: MELLIKNARIIDAIQDFKGDIYIKDGVINEIAQEIKKDNVEVLNCEEKILMPAFIDTHAHFRDPGLTCKEDLESGSKAALRGGYTGVCLMANTKPICSSKEVVQYVRDKSKELDLIDIHQCISVTQNFDGKTLDHLNEFKDDNEVKAISDDGVGVSNSNIMLEAMKIAKENNWVLMSHAESPEFSKSDMRIAENMMTIRDVELAKLSGAHVHMCHVSTKEALKCIIAAKDEGANITLEVTPHHIGLTKEINDYRVNPPIREKEDVEEIIKAIKMGNVDTIGTDHAPHTLEEKSKGSPGMVGLETAFPICYTKLVRENGVSLNELSKLMSLNPARLLGMNKGRISIGVEADLVLIDIDKKIKVDSNEFVSKGRNTPFEGMEYYGEVLATIKSGKIKYKK.

Positions 58 and 60 each coordinate Zn(2+). Substrate is bound by residues His-60 to Arg-62 and Asn-92. 3 residues coordinate Zn(2+): Asp-151, His-178, and His-215. Position 256 (Asn-256) interacts with substrate. Asp-283 is a Zn(2+) binding site. Residue Asp-283 is part of the active site. Substrate contacts are provided by residues His-287 and Pro-297–Gly-298.

This sequence belongs to the metallo-dependent hydrolases superfamily. DHOase family. Class I DHOase subfamily. Zn(2+) serves as cofactor.

The enzyme catalyses (S)-dihydroorotate + H2O = N-carbamoyl-L-aspartate + H(+). It participates in pyrimidine metabolism; UMP biosynthesis via de novo pathway; (S)-dihydroorotate from bicarbonate: step 3/3. Catalyzes the reversible cyclization of carbamoyl aspartate to dihydroorotate. The polypeptide is Dihydroorotase (Clostridium botulinum (strain Eklund 17B / Type B)).